Reading from the N-terminus, the 437-residue chain is UDP-N-acetylmuramate--L-alanine ligase (437 aa).

108–114 (GAHGKTS) contacts ATP.

Belongs to the MurCDEF family.

The protein localises to the cytoplasm. It catalyses the reaction UDP-N-acetyl-alpha-D-muramate + L-alanine + ATP = UDP-N-acetyl-alpha-D-muramoyl-L-alanine + ADP + phosphate + H(+). The protein operates within cell wall biogenesis; peptidoglycan biosynthesis. Its function is as follows. Cell wall formation. This chain is UDP-N-acetylmuramate--L-alanine ligase, found in Staphylococcus carnosus (strain TM300).